A 200-amino-acid chain; its full sequence is Small ribosomal subunit protein uS4 (200 aa).

Residues 94–157 (SRLDNLVFRA…QTSPQVKDAV (64 aa)) form the S4 RNA-binding domain.

The protein belongs to the universal ribosomal protein uS4 family. In terms of assembly, part of the 30S ribosomal subunit. Contacts protein S5. The interaction surface between S4 and S5 is involved in control of translational fidelity.

In terms of biological role, one of the primary rRNA binding proteins, it binds directly to 16S rRNA where it nucleates assembly of the body of the 30S subunit. With S5 and S12 plays an important role in translational accuracy. The chain is Small ribosomal subunit protein uS4 from Metamycoplasma arthritidis (strain 158L3-1) (Mycoplasma arthritidis).